We begin with the raw amino-acid sequence, 856 residues long: PR domain zinc finger protein 1 (856 aa).

One can recognise an SET domain in the interval 115–233 (PRNLLFKYAA…ANQELLVWYC (119 aa)). Disordered regions lie at residues 357–399 (THSP…APGL) and 532–571 (GAAA…VMAA). Low complexity-rich tracts occupy residues 373–393 (SSPE…NTVS) and 542–556 (SPPS…AATS). The tract at residues 558–605 (HVVQPKATSSVMAAPSTDGAMNLIKNKRNMTGYKTLPYPLKKQNGKIK) is interaction with PIAS1. C2H2-type zinc fingers lie at residues 606–628 (YECN…LRVH), 634–656 (FKCQ…YLVH), 662–684 (HECQ…LRLH), and 690–712 (YQCK…KRLH). Residue lysine 847 forms a Glycyl lysine isopeptide (Lys-Gly) (interchain with G-Cter in SUMO1); alternate linkage. Residue lysine 847 forms a Glycyl lysine isopeptide (Lys-Gly) (interchain with G-Cter in SUMO2); alternate linkage.

It belongs to the class V-like SAM-binding methyltransferase superfamily. In terms of assembly, interacts with PRMT5. Interacts with FBXO10. Interacts with FBXO11. Interacts with multiple nuclear sumoylation E3 ligases, including CBX4, PIAS1, PIAS2, PIAS3, PIAS4, PML and RNF4, but not RANBP2. Interacts with LDB1, SMARCD3 and SMARCC1. Interacts with EEIG1; following TNFSF11/RANKL stimulation in bone marrow-derived macrophages, the interaction promotes the binding of PRDM1/BLIMP1 to the gene promoter of IRF8. Post-translationally, sumoylation at Lys-847 by PIAS1 increases transcriptional repressor activity, and is critical for plasma cell differentiation. Can be sumoylated with SUMO1 and SUMO2 by PML. Degradation of the wild-type protein mostly depends upon sumoylation, rather than ubiquitination. Desumoylated by SENP1 and SENP6. In terms of processing, ubiquitinated by SCF(FBXO11), leading to its degradation by the proteasome. As to expression, expressed in bone marrow macrophages (at protein level). Expressed in innate lymphocytes, including tissue-resident conventional natural killer (cNK) cells in liver. Expressed also weakly in tissue-resident natural killer (trNK) and natural killer T (NKT) cells in liver. Expressed in bone marrow, spleen and lymph node but not in brain, heart, kidney, liver, ovary or muscle. Weak expression detected in the lung. In terms of tissue distribution, expressed only in the yolk sac. As to expression, expressed in embryo, yolk sac, placenta, splenocytes, and activated T-cells.

It is found in the nucleus. The protein resides in the cytoplasm. Transcription factor that mediates a transcriptional program in various innate and adaptive immune tissue-resident lymphocyte T cell types such as tissue-resident memory T (Trm), natural killer (trNK) and natural killer T (NKT) cells and negatively regulates gene expression of proteins that promote the egress of tissue-resident T-cell populations from non-lymphoid organs. Plays a role in the development, retention and long-term establishment of adaptive and innate tissue-resident lymphocyte T cell types in non-lymphoid organs, such as the skin and gut, but also in other nonbarrier tissues like liver and kidney, and therefore may provide immediate immunological protection against reactivating infections or viral reinfection. Binds specifically to the PRDI element in the promoter of the beta-interferon gene. Drives the maturation of B-lymphocytes into Ig secreting cells. Associates with the transcriptional repressor ZNF683 to chromatin at gene promoter regions. Binds to the promoter and acts as a transcriptional repressor of IRF8, thereby promotes transcription of osteoclast differentiation factors such as NFATC1 and EEIG1. This is PR domain zinc finger protein 1 (Prdm1) from Mus musculus (Mouse).